The primary structure comprises 396 residues: Phosphoglycerate kinase (396 aa).

Substrate is bound by residues 21–23 (DFN), R36, 59–62 (HLGR), R118, and R151. Residues K201, G292, E323, and 349–352 (GGDS) each bind ATP.

Belongs to the phosphoglycerate kinase family. In terms of assembly, monomer.

It localises to the cytoplasm. It catalyses the reaction (2R)-3-phosphoglycerate + ATP = (2R)-3-phospho-glyceroyl phosphate + ADP. Its pathway is carbohydrate degradation; glycolysis; pyruvate from D-glyceraldehyde 3-phosphate: step 2/5. The sequence is that of Phosphoglycerate kinase from Leptospira interrogans serogroup Icterohaemorrhagiae serovar Lai (strain 56601).